The primary structure comprises 130 residues: Small ribosomal subunit protein bS6 (130 aa).

The tract at residues 96–130 (VTEASPMAKARDERDSRRSPSDDRIEEESAEENAE) is disordered. Basic and acidic residues predominate over residues 104 to 118 (KARDERDSRRSPSDD). Residues 119–130 (RIEEESAEENAE) are compositionally biased toward acidic residues.

This sequence belongs to the bacterial ribosomal protein bS6 family.

Binds together with bS18 to 16S ribosomal RNA. This chain is Small ribosomal subunit protein bS6, found in Shewanella denitrificans (strain OS217 / ATCC BAA-1090 / DSM 15013).